Reading from the N-terminus, the 105-residue chain is Large ribosomal subunit protein uL24 (105 aa).

This sequence belongs to the universal ribosomal protein uL24 family. As to quaternary structure, part of the 50S ribosomal subunit.

Functionally, one of two assembly initiator proteins, it binds directly to the 5'-end of the 23S rRNA, where it nucleates assembly of the 50S subunit. Its function is as follows. One of the proteins that surrounds the polypeptide exit tunnel on the outside of the subunit. This is Large ribosomal subunit protein uL24 from Nitrosococcus oceani (strain ATCC 19707 / BCRC 17464 / JCM 30415 / NCIMB 11848 / C-107).